A 145-amino-acid chain; its full sequence is 3-hydroxyacyl-[acyl-carrier-protein] dehydratase FabZ (145 aa).

The active site involves His-47.

The protein belongs to the thioester dehydratase family. FabZ subfamily.

The protein resides in the cytoplasm. The catalysed reaction is a (3R)-hydroxyacyl-[ACP] = a (2E)-enoyl-[ACP] + H2O. In terms of biological role, involved in unsaturated fatty acids biosynthesis. Catalyzes the dehydration of short chain beta-hydroxyacyl-ACPs and long chain saturated and unsaturated beta-hydroxyacyl-ACPs. The sequence is that of 3-hydroxyacyl-[acyl-carrier-protein] dehydratase FabZ from Geotalea uraniireducens (strain Rf4) (Geobacter uraniireducens).